The chain runs to 166 residues: NADPH-dependent 7-cyano-7-deazaguanine reductase (166 aa).

The active-site Thioimide intermediate is the C57. D64 serves as the catalytic Proton donor. Substrate-binding positions include 79-81 (VES) and 98-99 (HE).

The protein belongs to the GTP cyclohydrolase I family. QueF type 1 subfamily.

It localises to the cytoplasm. The catalysed reaction is 7-aminomethyl-7-carbaguanine + 2 NADP(+) = 7-cyano-7-deazaguanine + 2 NADPH + 3 H(+). Its pathway is tRNA modification; tRNA-queuosine biosynthesis. Catalyzes the NADPH-dependent reduction of 7-cyano-7-deazaguanine (preQ0) to 7-aminomethyl-7-deazaguanine (preQ1). The polypeptide is NADPH-dependent 7-cyano-7-deazaguanine reductase (Alkaliphilus metalliredigens (strain QYMF)).